Reading from the N-terminus, the 423-residue chain is Cyclin-B2-1 (423 aa).

Residues 1–61 (MDRASENRRL…EKSGKEEQKP (61 aa)) are disordered. Over residues 49–60 (PMLEKSGKEEQK) the composition is skewed to basic and acidic residues.

This sequence belongs to the cyclin family. Cyclin AB subfamily. In terms of assembly, interacts with CDKB2-1. In terms of tissue distribution, expressed in the intercalary meristem and the elongation zone of internodes. Expressed in adventitious roots at all nodes under submergence conditions.

Functionally, involved in the control of the cell cycle at the G2/M (mitosis) transition. May activate CDKB2-1 kinase. This Oryza sativa subsp. indica (Rice) protein is Cyclin-B2-1 (CYCB2-1).